The sequence spans 445 residues: Glutamate-1-semialdehyde 2,1-aminomutase (445 aa).

Position 263 is an N6-(pyridoxal phosphate)lysine (Lys263).

It belongs to the class-III pyridoxal-phosphate-dependent aminotransferase family. HemL subfamily. It depends on pyridoxal 5'-phosphate as a cofactor.

The protein resides in the cytoplasm. It catalyses the reaction (S)-4-amino-5-oxopentanoate = 5-aminolevulinate. It functions in the pathway porphyrin-containing compound metabolism; protoporphyrin-IX biosynthesis; 5-aminolevulinate from L-glutamyl-tRNA(Glu): step 2/2. The polypeptide is Glutamate-1-semialdehyde 2,1-aminomutase (Haloarcula marismortui (strain ATCC 43049 / DSM 3752 / JCM 8966 / VKM B-1809) (Halobacterium marismortui)).